A 312-amino-acid polypeptide reads, in one-letter code: Cytochrome f (312 aa).

The N-terminal stretch at 1 to 30 (MYLSKNFFLNLKTFIFSFFVLCFFSQSAQA) is a signal peptide. Heme is bound by residues Y31, C51, C54, and H55. A helical membrane pass occupies residues 278–298 (VQGLLLFSLFILLAQIFLVLK).

Belongs to the cytochrome f family. As to quaternary structure, the 4 large subunits of the cytochrome b6-f complex are cytochrome b6, subunit IV (17 kDa polypeptide, petD), cytochrome f and the Rieske protein, while the 4 small subunits are PetG, PetL, PetM and PetN. The complex functions as a dimer. Heme is required as a cofactor.

The protein resides in the plastid. Its subcellular location is the chloroplast thylakoid membrane. Component of the cytochrome b6-f complex, which mediates electron transfer between photosystem II (PSII) and photosystem I (PSI), cyclic electron flow around PSI, and state transitions. This chain is Cytochrome f (petA), found in Bigelowiella natans (Pedinomonas minutissima).